Reading from the N-terminus, the 678-residue chain is Protein CASP (678 aa).

Residues 1–619 are Cytoplasmic-facing; the sequence is MAANVGSMSQ…LILSNKTART (619 aa). Coiled-coil stretches lie at residues 16–40, 67–374, 427–454, and 502–556; these read DLQQLQRELDAAATVLANRQDESEQ, LLKS…TLKS, HLTEATAKAVEQKELIARLEQDLSTIQS, and LSII…FLQS. Ser586 is subject to Phosphoserine. Residues 620–640 traverse the membrane as a helical; Anchor for type IV membrane protein segment; that stretch reads IGFFYTLFLHCLVFLVLYKLA. Residues 641–678 lie on the Lumenal side of the membrane; that stretch reads WSESVERDCAATCAKKFADHLHKFHESDNGAAAGDLWQ.

The protein belongs to the CASP family. As to quaternary structure, homodimer; disulfide-linked. Interacts with GOLGA5. Ubiquitously expressed.

It localises to the golgi apparatus membrane. Functionally, may be involved in intra-Golgi retrograde transport. The protein is Protein CASP (Cux1) of Mus musculus (Mouse).